Consider the following 344-residue polypeptide: Phenylalanine--tRNA ligase alpha subunit (344 aa).

Glu-269 serves as a coordination point for Mg(2+).

Belongs to the class-II aminoacyl-tRNA synthetase family. Phe-tRNA synthetase alpha subunit type 1 subfamily. Tetramer of two alpha and two beta subunits. The cofactor is Mg(2+).

Its subcellular location is the cytoplasm. It catalyses the reaction tRNA(Phe) + L-phenylalanine + ATP = L-phenylalanyl-tRNA(Phe) + AMP + diphosphate + H(+). The chain is Phenylalanine--tRNA ligase alpha subunit from Ralstonia pickettii (strain 12J).